Reading from the N-terminus, the 256-residue chain is DNA repair protein RecO (256 aa).

It belongs to the RecO family.

Its function is as follows. Involved in DNA repair and RecF pathway recombination. This chain is DNA repair protein RecO, found in Bartonella henselae (strain ATCC 49882 / DSM 28221 / CCUG 30454 / Houston 1) (Rochalimaea henselae).